A 344-amino-acid chain; its full sequence is Arginine N-succinyltransferase (344 aa).

Leu125 is a binding site for succinyl-CoA. The active-site Proton donor is His229.

Belongs to the arginine N-succinyltransferase family.

It catalyses the reaction succinyl-CoA + L-arginine = N(2)-succinyl-L-arginine + CoA + H(+). It participates in amino-acid degradation; L-arginine degradation via AST pathway; L-glutamate and succinate from L-arginine: step 1/5. In terms of biological role, catalyzes the transfer of succinyl-CoA to arginine to produce N(2)-succinylarginine. The chain is Arginine N-succinyltransferase from Shigella flexneri.